The following is an 861-amino-acid chain: DNA mismatch repair protein MutS (861 aa).

618-625 (GPNMGGKS) is a binding site for ATP.

This sequence belongs to the DNA mismatch repair MutS family.

This protein is involved in the repair of mismatches in DNA. It is possible that it carries out the mismatch recognition step. This protein has a weak ATPase activity. This is DNA mismatch repair protein MutS from Shewanella sp. (strain MR-4).